Reading from the N-terminus, the 386-residue chain is Interleukin-13 receptor subunit alpha-2 (386 aa).

A signal peptide spans 1–21; sequence MAFIHLDVGFLYTLLVCTAFG. Topologically, residues 22–338 are extracellular; it reads SMLSNAEIKV…CWKGDIWKET (317 aa). Fibronectin type-III domains follow at residues 33–133, 138–234, and 239–338; these read PPQD…SPQG, KIQD…LQNI, and PPDY…WKET. An intrachain disulfide couples C64 to C112. N-linked (GlcNAc...) asparagine glycosylation is present at N114. Intrachain disulfides connect C144-C154 and C183-C196. N-linked (GlcNAc...) asparagine glycans are attached at residues N214 and N298. Cysteines 268 and 315 form a disulfide. A WSXWS motif motif is present at residues 321–325; that stretch reads WSEWS. The chain crosses the membrane as a helical span at residues 339–359; sequence LVFFLIPFAFVSIFVLVITCL. At 360 to 386 the chain is on the cytoplasmic side; that stretch reads LLYKQRALLKTIFHTKKEVFSHQDTFC.

The protein belongs to the type I cytokine receptor family. Type 5 subfamily. As to quaternary structure, interacts with IL4RA. Interacts with high affinity to interleukin-13 (IL13), but not to interleukin-4 (IL4). Post-translationally, cleaved by MMP8 leading to a soluble form that is also able to interact with IL13. Expressed in kidney, placenta, liver, skeletal muscle and thymus. Expression was not seen in whole blood and heart.

Its subcellular location is the cell membrane. Its function is as follows. Cell surface receptor that plays a role in the regulation of IL-13-mediated responses. Functions as a decoy receptor that inhibits IL-13- and IL-4-mediated signal transduction via the JAK-STAT pathway and thereby modulates immune responses and inflammation. Serves as a functional signaling receptor for IL-13 in an alternative pathway involving AP-1 ultimately leading to the production of TGFB1. The protein is Interleukin-13 receptor subunit alpha-2 (IL13RA2) of Canis lupus familiaris (Dog).